Here is a 556-residue protein sequence, read N- to C-terminus: MKTDIEIAQSVELQPIVDVVKKVGIDYDDLELYGKYKAKLSFDKIREVEKNPVGKLILVTAINPTPAGEGKSTITIGLADALNKIGKKTMIAIREPSLGPVMGIKGGAAGGGHAQVLPMEDINLHFTGDMHAITTANNALSALIDNHLHQGNALGIDQRRIIWKRVVDLNDRALRHVTVGLGSPVNGIPREDGFDITVASEIMAILCLATDIEDLKKRLANIVIGYRYDRTPVYVRDLEVEGALALVLKDAIKPNLVQTIYGTPAFVHGGPFANIAHGCNSVLATSTALRLADYTVTEAGFGADLGAEKFLDIKTPNLPTSPDAVVIVATLRALKMNGGVAKDALTEENVEAVRAGFANLKRHVENIRKFGIPAVVAINEFVSDTEAEVATLKELCAEIGVPVELASVWADGAEGGVTLAETVVKTIAEEPAHYTRLYDNDLSIEEKIEKIVTEIYRGSKVNFEKKAQTQIREIVKNSWDKLPICMAKTQYSFSDNPASLGAPENFEITIRELVPKLGAGFIVALTGDVMTMPGLPKRPAALNMDVAADGTAIGLF.

65–72 (TPAGEGKS) provides a ligand contact to ATP.

The protein belongs to the formate--tetrahydrofolate ligase family.

The enzyme catalyses (6S)-5,6,7,8-tetrahydrofolate + formate + ATP = (6R)-10-formyltetrahydrofolate + ADP + phosphate. Its pathway is one-carbon metabolism; tetrahydrofolate interconversion. This Streptococcus sanguinis (strain SK36) protein is Formate--tetrahydrofolate ligase 2.